The primary structure comprises 377 residues: Bradyzoite pseudokinase 1 (377 aa).

The signal sequence occupies residues 1 to 26 (MANTSVRRRQLLSSVLLLQWLTTVLG). The disordered stretch occupies residues 39–58 (HGQFPSLRRTEGVSQSGSGH). One can recognise a Protein kinase domain in the interval 48-354 (TEGVSQSGSG…IEEIMKDPLF (307 aa)).

It belongs to the protein kinase superfamily. STE Ser/Thr protein kinase family. WNG subfamily. As to quaternary structure, forms a complex composed of BPK1, MCP4, MAG1, GRA8 and GRA9. Interacts with MCP4. Interacts with MAG1. Interacts with GRA8. Interacts with GRA9.

The protein resides in the secreted. Its function is as follows. Required for the growth, maintenance, and/or stability, and thus infectivity, of bradyzoite cysts. This chain is Bradyzoite pseudokinase 1, found in Toxoplasma gondii.